The primary structure comprises 359 residues: Heme A synthase (359 aa).

Transmembrane regions (helical) follow at residues 8 to 28 (IMSI…VVGG), 94 to 114 (LLGR…CYLK), 124 to 144 (LLLI…MVKS), 159 to 179 (GHLL…LIII), and 215 to 235 (IIIF…GLDA). Histidine 274 provides a ligand contact to heme. 3 helical membrane-spanning segments follow: residues 276–296 (WFGI…IILN), 303–323 (MGMV…ITLL), and 328–348 (ILAA…FLFI). Histidine 334 contributes to the heme binding site.

This sequence belongs to the COX15/CtaA family. Type 2 subfamily. Interacts with CtaB. The cofactor is heme b.

It is found in the cell membrane. The catalysed reaction is Fe(II)-heme o + 2 A + H2O = Fe(II)-heme a + 2 AH2. It participates in porphyrin-containing compound metabolism; heme A biosynthesis; heme A from heme O: step 1/1. Its function is as follows. Catalyzes the conversion of heme O to heme A by two successive hydroxylations of the methyl group at C8. The first hydroxylation forms heme I, the second hydroxylation results in an unstable dihydroxymethyl group, which spontaneously dehydrates, resulting in the formyl group of heme A. The sequence is that of Heme A synthase from Orientia tsutsugamushi (strain Boryong) (Rickettsia tsutsugamushi).